The following is a 363-amino-acid chain: Probable dual-specificity RNA methyltransferase RlmN (363 aa).

Glu-106 (proton acceptor) is an active-site residue. The region spanning 112–345 (HEYGNSVCVT…VTIRREQGHD (234 aa)) is the Radical SAM core domain. A disulfide bridge links Cys-119 with Cys-350. The [4Fe-4S] cluster site is built by Cys-126, Cys-130, and Cys-133. Residues 176–177 (GE), Ser-208, 231–233 (SLH), and Asn-307 contribute to the S-adenosyl-L-methionine site. The S-methylcysteine intermediate role is filled by Cys-350.

The protein belongs to the radical SAM superfamily. RlmN family. The cofactor is [4Fe-4S] cluster.

Its subcellular location is the cytoplasm. The catalysed reaction is adenosine(2503) in 23S rRNA + 2 reduced [2Fe-2S]-[ferredoxin] + 2 S-adenosyl-L-methionine = 2-methyladenosine(2503) in 23S rRNA + 5'-deoxyadenosine + L-methionine + 2 oxidized [2Fe-2S]-[ferredoxin] + S-adenosyl-L-homocysteine. The enzyme catalyses adenosine(37) in tRNA + 2 reduced [2Fe-2S]-[ferredoxin] + 2 S-adenosyl-L-methionine = 2-methyladenosine(37) in tRNA + 5'-deoxyadenosine + L-methionine + 2 oxidized [2Fe-2S]-[ferredoxin] + S-adenosyl-L-homocysteine. Specifically methylates position 2 of adenine 2503 in 23S rRNA and position 2 of adenine 37 in tRNAs. This Bacillus subtilis (strain 168) protein is Probable dual-specificity RNA methyltransferase RlmN.